Reading from the N-terminus, the 284-residue chain is MQNKIVRIGDINVANDNPFVLFGGMNVLESRDMAMQVCEKYVEVTNKLGVPYVFKASFDKANRSSIHSYRGPGMEEGLKIFQELKQTFGVKIITDVHEIYQCKPVAEVADVIQLPAFLARQTDLVEAMARTGAVINVKKPQFLSPGQMGNIVEKIEECGNDKVILCDRGSNFGYDNLVVDMLGFGVMKKVSKGAPVIFDVTHSLQCRDPFGAASGGRRDQVTELARAGLAVGIAGLFLEAHPDPNNAKCDGPSALPLSVLEGFVSQMKALDDLVKSFPQLDTSK.

The protein belongs to the KdsA family.

It localises to the cytoplasm. It catalyses the reaction D-arabinose 5-phosphate + phosphoenolpyruvate + H2O = 3-deoxy-alpha-D-manno-2-octulosonate-8-phosphate + phosphate. It functions in the pathway carbohydrate biosynthesis; 3-deoxy-D-manno-octulosonate biosynthesis; 3-deoxy-D-manno-octulosonate from D-ribulose 5-phosphate: step 2/3. The protein operates within bacterial outer membrane biogenesis; lipopolysaccharide biosynthesis. The polypeptide is 2-dehydro-3-deoxyphosphooctonate aldolase (Mannheimia succiniciproducens (strain KCTC 0769BP / MBEL55E)).